The chain runs to 472 residues: 3-isopropylmalate dehydratase large subunit (472 aa).

[4Fe-4S] cluster contacts are provided by Cys-347, Cys-407, and Cys-410.

Belongs to the aconitase/IPM isomerase family. LeuC type 1 subfamily. As to quaternary structure, heterodimer of LeuC and LeuD. [4Fe-4S] cluster serves as cofactor.

The catalysed reaction is (2R,3S)-3-isopropylmalate = (2S)-2-isopropylmalate. It participates in amino-acid biosynthesis; L-leucine biosynthesis; L-leucine from 3-methyl-2-oxobutanoate: step 2/4. Catalyzes the isomerization between 2-isopropylmalate and 3-isopropylmalate, via the formation of 2-isopropylmaleate. The polypeptide is 3-isopropylmalate dehydratase large subunit (Opitutus terrae (strain DSM 11246 / JCM 15787 / PB90-1)).